Reading from the N-terminus, the 130-residue chain is Nascent polypeptide-associated complex protein (130 aa).

An NAC-A/B domain is found at 8-75 (PKMMRQMQKM…AKNIKKDDIK (68 aa)).

This sequence belongs to the NAC-alpha family. As to quaternary structure, homodimer. Interacts with the ribosome. Binds ribosomal RNA.

Contacts the emerging nascent chain on the ribosome. The sequence is that of Nascent polypeptide-associated complex protein from Methanococcus aeolicus (strain ATCC BAA-1280 / DSM 17508 / OCM 812 / Nankai-3).